Here is a 181-residue protein sequence, read N- to C-terminus: Isopentenyl-diphosphate Delta-isomerase (181 aa).

Positions 25 and 32 each coordinate Mn(2+). Residues 30–164 (LLHLAFSCWL…PWAFSPWMVL (135 aa)) enclose the Nudix hydrolase domain. The active site involves Cys67. His69 contributes to the Mn(2+) binding site. Glu87 serves as a coordination point for Mg(2+). The Mn(2+) site is built by Glu114 and Glu116. Glu116 is a catalytic residue.

This sequence belongs to the IPP isomerase type 1 family. In terms of assembly, homodimer. It depends on Mg(2+) as a cofactor. Mn(2+) is required as a cofactor.

It localises to the cytoplasm. It carries out the reaction isopentenyl diphosphate = dimethylallyl diphosphate. The protein operates within isoprenoid biosynthesis; dimethylallyl diphosphate biosynthesis; dimethylallyl diphosphate from isopentenyl diphosphate: step 1/1. In terms of biological role, catalyzes the 1,3-allylic rearrangement of the homoallylic substrate isopentenyl (IPP) to its highly electrophilic allylic isomer, dimethylallyl diphosphate (DMAPP). This chain is Isopentenyl-diphosphate Delta-isomerase, found in Citrobacter koseri (strain ATCC BAA-895 / CDC 4225-83 / SGSC4696).